A 125-amino-acid polypeptide reads, in one-letter code: Small ribosomal subunit protein uS12 (125 aa).

Positions 1-31 (MPTINQLVRQGREVETTKSKSPAMQNSPQRR) are disordered. A compositionally biased stretch (polar residues) spans 19 to 29 (SKSPAMQNSPQ). A 3-methylthioaspartic acid modification is found at Asp89.

This sequence belongs to the universal ribosomal protein uS12 family. In terms of assembly, part of the 30S ribosomal subunit. Contacts proteins S8 and S17. May interact with IF1 in the 30S initiation complex.

Functionally, with S4 and S5 plays an important role in translational accuracy. In terms of biological role, interacts with and stabilizes bases of the 16S rRNA that are involved in tRNA selection in the A site and with the mRNA backbone. Located at the interface of the 30S and 50S subunits, it traverses the body of the 30S subunit contacting proteins on the other side and probably holding the rRNA structure together. The combined cluster of proteins S8, S12 and S17 appears to hold together the shoulder and platform of the 30S subunit. This is Small ribosomal subunit protein uS12 from Paracidovorax citrulli (strain AAC00-1) (Acidovorax citrulli).